Reading from the N-terminus, the 143-residue chain is Nucleoside diphosphate kinase (143 aa).

Lysine 11, phenylalanine 59, arginine 87, threonine 93, arginine 104, and asparagine 114 together coordinate ATP. Residue histidine 117 is the Pros-phosphohistidine intermediate of the active site.

Belongs to the NDK family. In terms of assembly, homotetramer. Requires Mg(2+) as cofactor.

The protein localises to the cytoplasm. The catalysed reaction is a 2'-deoxyribonucleoside 5'-diphosphate + ATP = a 2'-deoxyribonucleoside 5'-triphosphate + ADP. The enzyme catalyses a ribonucleoside 5'-diphosphate + ATP = a ribonucleoside 5'-triphosphate + ADP. In terms of biological role, major role in the synthesis of nucleoside triphosphates other than ATP. The ATP gamma phosphate is transferred to the NDP beta phosphate via a ping-pong mechanism, using a phosphorylated active-site intermediate. This is Nucleoside diphosphate kinase from Shewanella sp. (strain MR-4).